The chain runs to 374 residues: MTMAANLARRLIGNRSTQILGAVNSSSGAASSVARAFCSSTTPITATLFPGDGIGPEIAESVKKVFTTAGVPIEWEEHYVGTEIDPRTQSFLTWESLESVRRNKVGLKGPMATPIGKGHRSLNLTLRKELNLYANVRPCYSLPGYKTRYDDVDLITIRENTEGEYSGLEHQVVRGVVESLKIITRQASLRVAEYAFLYAKTHGRERVSAIHKANIMQKTDGLFLKCCREVAEKYPEITYEEVVIDNCCMMLVKNPALFDVLVMPNLYGDIISDLCAGLVGGLGLTPSCNIGEDGVALAEAVHGSAPDIAGKNLANPTALLLSGVMMLRHLKFNEQAEQIHSAIINTIAEGKYRTADLGGSSTTTEFTKAICDHL.

Residues 1–44 (MTMAANLARRLIGNRSTQILGAVNSSSGAASSVARAFCSSTTPI) constitute a mitochondrion transit peptide. Substrate-binding residues include Arg-127, Arg-137, Arg-158, and Asp-245. The Mg(2+) site is built by Asp-245, Asp-269, and Asp-273.

It belongs to the isocitrate and isopropylmalate dehydrogenases family. Heterooligomer of catalytic and regulatory subunits. Requires Mg(2+) as cofactor. Mn(2+) is required as a cofactor. In terms of tissue distribution, ubiquitous.

Its subcellular location is the mitochondrion. The catalysed reaction is D-threo-isocitrate + NAD(+) = 2-oxoglutarate + CO2 + NADH. Its function is as follows. Performs an essential role in the oxidative function of the citric acid cycle. In Arabidopsis thaliana (Mouse-ear cress), this protein is Isocitrate dehydrogenase [NAD] catalytic subunit 5, mitochondrial (IDH5).